A 292-amino-acid polypeptide reads, in one-letter code: Diaminopimelate epimerase (292 aa).

N14 and N78 together coordinate substrate. Catalysis depends on C87, which acts as the Proton donor. Residues 88-89 (GN), N164, N197, and 221-222 (ER) contribute to the substrate site. C230 (proton acceptor) is an active-site residue. Substrate is bound at residue 231–232 (GT).

The protein belongs to the diaminopimelate epimerase family. In terms of assembly, homodimer.

The protein localises to the cytoplasm. The catalysed reaction is (2S,6S)-2,6-diaminopimelate = meso-2,6-diaminopimelate. Its pathway is amino-acid biosynthesis; L-lysine biosynthesis via DAP pathway; DL-2,6-diaminopimelate from LL-2,6-diaminopimelate: step 1/1. Its function is as follows. Catalyzes the stereoinversion of LL-2,6-diaminopimelate (L,L-DAP) to meso-diaminopimelate (meso-DAP), a precursor of L-lysine and an essential component of the bacterial peptidoglycan. This chain is Diaminopimelate epimerase, found in Leifsonia xyli subsp. xyli (strain CTCB07).